The sequence spans 644 residues: Ribonuclease R (644 aa).

Residues 211–529 (RINYSHIPFI…LHRLLKELLF (319 aa)) form the RNB domain. Residues 573-644 (LELLEKEFLG…ITERIKEHVS (72 aa)) enclose the S1 motif domain.

Belongs to the RNR ribonuclease family. RNase R subfamily.

It is found in the cytoplasm. The catalysed reaction is Exonucleolytic cleavage in the 3'- to 5'-direction to yield nucleoside 5'-phosphates.. 3'-5' exoribonuclease that releases 5'-nucleoside monophosphates and is involved in maturation of structured RNAs. This chain is Ribonuclease R, found in Helicobacter pylori (strain ATCC 700392 / 26695) (Campylobacter pylori).